The following is a 181-amino-acid chain: Translation initiation factor IF-3, chloroplastic (181 aa).

The protein belongs to the IF-3 family. As to quaternary structure, monomer.

It localises to the plastid. Its subcellular location is the chloroplast. Functionally, IF-3 binds to the 30S ribosomal subunit and shifts the equilibrium between 70S ribosomes and their 50S and 30S subunits in favor of the free subunits, thus enhancing the availability of 30S subunits on which protein synthesis initiation begins. This chain is Translation initiation factor IF-3, chloroplastic, found in Galdieria sulphuraria (Red alga).